The chain runs to 31 residues: Chymotrypsin (31 aa).

A Peptidase S1 domain is found at 1-31 (IVGGVEAVPGVWPYQAALFIIDMYFCGGSLI).

Belongs to the peptidase S1 family.

It localises to the secreted. The protein localises to the extracellular space. It carries out the reaction Preferential cleavage: Tyr-|-Xaa, Trp-|-Xaa, Phe-|-Xaa, Leu-|-Xaa.. The protein is Chymotrypsin of Penaeus monodon (Giant tiger prawn).